The sequence spans 150 residues: Large ribosomal subunit protein bL9 (150 aa).

This sequence belongs to the bacterial ribosomal protein bL9 family.

Functionally, binds to the 23S rRNA. This Mycoplasmopsis pulmonis (strain UAB CTIP) (Mycoplasma pulmonis) protein is Large ribosomal subunit protein bL9.